A 390-amino-acid polypeptide reads, in one-letter code: 8-amino-7-oxononanoate synthase (390 aa).

Arg-19 contributes to the substrate binding site. Position 106–107 (Gly-106–Tyr-107) interacts with pyridoxal 5'-phosphate. Residue His-131 coordinates substrate. The pyridoxal 5'-phosphate site is built by Ser-176, His-204, and Thr-233. Lys-236 is modified (N6-(pyridoxal phosphate)lysine). Thr-350 contacts substrate.

Belongs to the class-II pyridoxal-phosphate-dependent aminotransferase family. BioF subfamily. In terms of assembly, homodimer. The cofactor is pyridoxal 5'-phosphate.

The enzyme catalyses 6-carboxyhexanoyl-[ACP] + L-alanine + H(+) = (8S)-8-amino-7-oxononanoate + holo-[ACP] + CO2. Its pathway is cofactor biosynthesis; biotin biosynthesis. Functionally, catalyzes the decarboxylative condensation of pimeloyl-[acyl-carrier protein] and L-alanine to produce 8-amino-7-oxononanoate (AON), [acyl-carrier protein], and carbon dioxide. The polypeptide is 8-amino-7-oxononanoate synthase (Pseudomonas putida (strain ATCC 47054 / DSM 6125 / CFBP 8728 / NCIMB 11950 / KT2440)).